Consider the following 754-residue polypeptide: MSAEVSTTPAADNVNGTPEATNAAATSAPEVTAVESSSPTSPNNNNQPHSASLYVGELDPSVTEAMLYELFSSIGQVASIRVCRDAVTRRSLGYAYVNYNNTADGERALEDLNYTLIKGKPCRIMWSQRDPALRKTGQGNVFIKNLDSAIDNKALHDTFAAFGNILSCKVAQDEFGNSKGYGFVHYETAEAANNAIKHVNGMLLNDKKVFVGHHISKKDRQSKFDEMKANFTNIYIKNIDPDVTEEEFRKIFEQFGEITSATLSRDPEGKSRGFGFVNYSTHESAQAAVDEMHDKEVKTQKLYVGRAQKKHEREEELRKQYEAARLEKASKYQGVNLYVKNLTDDVDDEKLRELFGPYGTITSAKVMRDSTPAERTETPDSEKEKEVNKENEKKEDEEKAAEEKPKESDEEKKDETKKSDKKLLGKSKGFGFVCFSSPDEASKAVTEMNQRMVNGKPLYVALAQRKDVRRSQLEASIQARNTIRQQQAAAAAGMPQPYMQPAVFYGPGQQGFIPAGQRGGMPFAPQPGMVMGIPGGRPGQYPGPFPGQQGGRGMGPNQQMPPNFQGIPMGAMQGPGGIPNGMGYPQAMGQVQFGRGGGRGQVPGMPMGQGMRGPGYQGRGGPQGGPRPQGGRGQNAAAQPAAGREEAPAGALTAQALNAAAPPQQKQMLGEALYPKIQAQQPELAGKITGMLLEMDNTELLGLLEDDDALRAKVDEALSVYDEYMKNKGEGEAPADADKPKEAAKETATEENKS.

Over residues 1 to 25 the composition is skewed to polar residues; it reads MSAEVSTTPAADNVNGTPEATNAAA. The disordered stretch occupies residues 1–52; it reads MSAEVSTTPAADNVNGTPEATNAAATSAPEVTAVESSSPTSPNNNNQPHSAS. Over residues 36–46 the composition is skewed to low complexity; the sequence is SSSPTSPNNNN. 4 RRM domains span residues 51 to 129, 139 to 216, 232 to 309, and 335 to 465; these read ASLY…WSQR, GNVF…HHIS, TNIY…RAQK, and VNLY…LAQR. 2 disordered regions span residues 365-420 and 595-648; these read KVMR…KKSD and RGGG…EEAP. Residues 366 to 420 are compositionally biased toward basic and acidic residues; it reads VMRDSTPAERTETPDSEKEKEVNKENEKKEDEEKAAEEKPKESDEEKKDETKKSD. Residues 610 to 633 show a composition bias toward gly residues; sequence GMRGPGYQGRGGPQGGPRPQGGRG. The span at 634–648 shows a compositional bias: low complexity; the sequence is QNAAAQPAAGREEAP. The PABC domain maps to 649–726; sequence AGALTAQALN…ALSVYDEYMK (78 aa). The interval 729-754 is disordered; sequence GEGEAPADADKPKEAAKETATEENKS.

Belongs to the polyadenylate-binding protein type-1 family.

Its subcellular location is the cytoplasm. The protein localises to the nucleus. Its function is as follows. Binds the poly(A) tail of mRNA. Appears to be an important mediator of the multiple roles of the poly(A) tail in mRNA biogenesis, stability and translation. In the nucleus, involved in both mRNA cleavage and polyadenylation. Is also required for efficient mRNA export to the cytoplasm. Acts in concert with a poly(A)-specific nuclease (PAN) to affect poly(A) tail shortening, which may occur concomitantly with either nucleocytoplasmic mRNA transport or translational initiation. In the cytoplasm, stimulates translation initiation and regulates mRNA decay through translation termination-coupled poly(A) shortening, probably mediated by PAN. This chain is Polyadenylate-binding protein, cytoplasmic and nuclear (pab1), found in Aspergillus clavatus (strain ATCC 1007 / CBS 513.65 / DSM 816 / NCTC 3887 / NRRL 1 / QM 1276 / 107).